A 220-amino-acid polypeptide reads, in one-letter code: Thiopurine S-methyltransferase (220 aa).

Trp-14, Leu-49, Glu-70, and Arg-127 together coordinate S-adenosyl-L-methionine.

This sequence belongs to the class I-like SAM-binding methyltransferase superfamily. TPMT family.

Its subcellular location is the cytoplasm. The enzyme catalyses S-adenosyl-L-methionine + a thiopurine = S-adenosyl-L-homocysteine + a thiopurine S-methylether.. The sequence is that of Thiopurine S-methyltransferase from Gluconobacter oxydans (strain 621H) (Gluconobacter suboxydans).